We begin with the raw amino-acid sequence, 404 residues long: Cysteine desulfurase IscS (404 aa).

Residues 75-76, asparagine 155, glutamine 183, and 203-205 each bind pyridoxal 5'-phosphate; these read AT and SAH. Residue lysine 206 is modified to N6-(pyridoxal phosphate)lysine. Residue threonine 243 participates in pyridoxal 5'-phosphate binding. Cysteine 328 acts as the Cysteine persulfide intermediate in catalysis. Position 328 (cysteine 328) interacts with [2Fe-2S] cluster.

It belongs to the class-V pyridoxal-phosphate-dependent aminotransferase family. NifS/IscS subfamily. As to quaternary structure, homodimer. Forms a heterotetramer with IscU, interacts with other sulfur acceptors. The cofactor is pyridoxal 5'-phosphate.

Its subcellular location is the cytoplasm. The catalysed reaction is (sulfur carrier)-H + L-cysteine = (sulfur carrier)-SH + L-alanine. The protein operates within cofactor biosynthesis; iron-sulfur cluster biosynthesis. Functionally, master enzyme that delivers sulfur to a number of partners involved in Fe-S cluster assembly, tRNA modification or cofactor biosynthesis. Catalyzes the removal of elemental sulfur atoms from cysteine to produce alanine. Functions as a sulfur delivery protein for Fe-S cluster synthesis onto IscU, an Fe-S scaffold assembly protein, as well as other S acceptor proteins. The sequence is that of Cysteine desulfurase IscS from Colwellia psychrerythraea (strain 34H / ATCC BAA-681) (Vibrio psychroerythus).